The primary structure comprises 198 residues: Guanine nucleotide-binding protein subunit alpha-11 (198 aa).

The interval 1 to 11 (LLGTGESGKST) is G1 motif. The G-alpha domain maps to 1-198 (LLGTGESGKS…LSEYDHVLVE (198 aa)). Residues 3 to 10 (GTGESGKS) and 137 to 140 (LRVR) contribute to the GTP site. S10 lines the Mg(2+) pocket. The interval 135-143 (DVLRVRVPT) is G2 motif. T143 is a binding site for Mg(2+). The tract at residues 158–167 (FRMVDVGGQR) is G3 motif.

This sequence belongs to the G-alpha family. G(q) subfamily. In terms of assembly, g proteins are composed of 3 units; alpha, beta and gamma. The alpha chain contains the guanine nucleotide binding site. Interacts with RGS22. Interacts with NTSR1.

The protein resides in the cell membrane. It localises to the cytoplasm. It catalyses the reaction GTP + H2O = GDP + phosphate + H(+). Its function is as follows. Guanine nucleotide-binding proteins (G proteins) function as transducers downstream of G protein-coupled receptors (GPCRs) in numerous signaling cascades. The alpha chain contains the guanine nucleotide binding site and alternates between an active, GTP-bound state and an inactive, GDP-bound state. Signaling by an activated GPCR promotes GDP release and GTP binding. The alpha subunit has a low GTPase activity that converts bound GTP to GDP, thereby terminating the signal. Both GDP release and GTP hydrolysis are modulated by numerous regulatory proteins. Signaling is mediated via phospholipase C-beta-dependent inositol lipid hydrolysis for signal propagation: activates phospholipase C-beta: following GPCR activation, GNA11 activates PLC-beta (PLCB1, PLCB2, PLCB3 or PLCB4), leading to production of diacylglycerol (DAG) and inositol 1,4,5-trisphosphate (IP3). Transduces FFAR4 signaling in response to long-chain fatty acids (LCFAs). Together with GNAQ, required for heart development. In the respiratory epithelium, transmits OXGR1-dependent signals that lead to downstream intracellular Ca(2+) release and mucocilliary clearance of airborne pathogens. This chain is Guanine nucleotide-binding protein subunit alpha-11 (GNA11), found in Canis lupus familiaris (Dog).